A 217-amino-acid chain; its full sequence is Vesicle transport through interaction with t-SNAREs homolog 1A (217 aa).

The Cytoplasmic portion of the chain corresponds to 1–192 (MSSDFEGYEQ…GMLRRIIQNR (192 aa)). Coiled-coil stretches lie at residues 31–92 (PDEK…KRSR) and 112–178 (ENQR…GKSS). A helical; Anchor for type IV membrane protein membrane pass occupies residues 193-213 (ILLVILGIIVVIAILTAIAFF). At 214–217 (VKGH) the chain is on the vesicular side.

This sequence belongs to the VTI1 family. As to quaternary structure, interacts with distinct SNARE complexes that contain either STX5 or STX6. Interacts with NAPA and, to a lesser extent, with NAPG. Identified in a complex containing STX6, STX12, VAMP4 and VTI1A. Widely expressed.

The protein resides in the golgi apparatus membrane. In terms of biological role, V-SNARE that mediates vesicle transport pathways through interactions with t-SNAREs on the target membrane. These interactions are proposed to mediate aspects of the specificity of vesicle trafficking and to promote fusion of the lipid bilayers. Involved in vesicular transport from the late endosomes to the trans-Golgi network. Along with VAMP7, involved in an non-conventional RAB1-dependent traffic route to the cell surface used by KCNIP1 and KCND2. May be concerned with increased secretion of cytokines associated with cellular senescence. This chain is Vesicle transport through interaction with t-SNAREs homolog 1A (Vti1a), found in Mus musculus (Mouse).